The primary structure comprises 298 residues: N-acetylmuramic acid 6-phosphate etherase (298 aa).

Residues 55–218 (IHTQVSGGGR…STGLMIKSGK (164 aa)) enclose the SIS domain. Glu83 (proton donor) is an active-site residue. Glu114 is an active-site residue.

This sequence belongs to the GCKR-like family. MurNAc-6-P etherase subfamily. Homodimer.

The enzyme catalyses N-acetyl-D-muramate 6-phosphate + H2O = N-acetyl-D-glucosamine 6-phosphate + (R)-lactate. It functions in the pathway amino-sugar metabolism; 1,6-anhydro-N-acetylmuramate degradation. Its pathway is amino-sugar metabolism; N-acetylmuramate degradation. It participates in cell wall biogenesis; peptidoglycan recycling. Specifically catalyzes the cleavage of the D-lactyl ether substituent of MurNAc 6-phosphate, producing GlcNAc 6-phosphate and D-lactate. Together with AnmK, is also required for the utilization of anhydro-N-acetylmuramic acid (anhMurNAc) either imported from the medium or derived from its own cell wall murein, and thus plays a role in cell wall recycling. The polypeptide is N-acetylmuramic acid 6-phosphate etherase (Escherichia coli O1:K1 / APEC).